The primary structure comprises 181 residues: Adenine phosphoribosyltransferase (181 aa).

This sequence belongs to the purine/pyrimidine phosphoribosyltransferase family. In terms of assembly, homodimer.

It is found in the cytoplasm. It carries out the reaction AMP + diphosphate = 5-phospho-alpha-D-ribose 1-diphosphate + adenine. It functions in the pathway purine metabolism; AMP biosynthesis via salvage pathway; AMP from adenine: step 1/1. In terms of biological role, catalyzes a salvage reaction resulting in the formation of AMP, that is energically less costly than de novo synthesis. The sequence is that of Adenine phosphoribosyltransferase from Shewanella amazonensis (strain ATCC BAA-1098 / SB2B).